Reading from the N-terminus, the 342-residue chain is MTTLTITRPDDWHVHLRDGEVLADTVRDISRYNGRALIMPNTVPPVTTSEMALAYRDRIQAHNQTEQFSPLMSLYLTDNTTADEVRKAKASGAVVAAKLYPAGATTNSDSGVTDVKKIYPVLQAMQEVGMLLLVHGEVTTHDVDIFDREKTFLDNVLAPIVQDFPDLKIVLEHITTSDAVVFVKNANENVAATITAHHLLYNRNHMLVGGIKPHFYCLPILKRNTHQLALISAATSGNKKFFLGTDSAPHAKGAKESACGCAGSYTAHAAVELYAEVFEQAGKLENLEAFASHNGPDFYGLPRNQDTITLVKDAWPVPASMPFGGDIVVPIRAGENMEWKVK.

His-13 and His-15 together coordinate Zn(2+). Residues 15-17 and Asn-41 each bind substrate; that span reads HLR. Lys-98, His-135, and His-173 together coordinate Zn(2+). Lys-98 is subject to N6-carboxylysine. A substrate-binding site is contributed by His-135. Residue Leu-218 coordinates substrate. Asp-246 provides a ligand contact to Zn(2+). Asp-246 is a catalytic residue. Substrate contacts are provided by His-250 and Ala-262.

Belongs to the metallo-dependent hydrolases superfamily. DHOase family. Class II DHOase subfamily. Homodimer. The cofactor is Zn(2+).

It carries out the reaction (S)-dihydroorotate + H2O = N-carbamoyl-L-aspartate + H(+). It participates in pyrimidine metabolism; UMP biosynthesis via de novo pathway; (S)-dihydroorotate from bicarbonate: step 3/3. Functionally, catalyzes the reversible cyclization of carbamoyl aspartate to dihydroorotate. The sequence is that of Dihydroorotase from Vibrio vulnificus (strain CMCP6).